Consider the following 343-residue polypeptide: MIAELFTNNALNLVIIFGSCAALILMSFWFRRGNRKRKGFLFHAVQFLIYTIIISAVGSIINYVIENYKLKFITPGVIDFICTSLIAVILTIKLFLLINQFEKQQIKKGRDITSARIMSRIIKITIIVVLVLLYGEHFGMSLSGLLTFGGIGGLAVGMAGKDILSNFFSGIMLYFDRPFSIGDWIRSPDRNIEGTVAEIGWRITKITTFDNRPLYVPNSLFSSISVENPGRMTNRRITTTIGLRYEDAAKVGVIVEAVREMLKNHPAIDQRQTLLVYFNQFADSSLNIMVYCFTKTTVWAEWLAAQQDVYLKIIDIVQSHGADFAFPSQTLYMDNITPPEQGR.

Residues 1–9 (MIAELFTNN) are Periplasmic-facing. A helical membrane pass occupies residues 10-30 (ALNLVIIFGSCAALILMSFWF). The Cytoplasmic portion of the chain corresponds to 31 to 40 (RRGNRKRKGF). Residues 41 to 61 (LFHAVQFLIYTIIISAVGSII) traverse the membrane as a helical segment. Over 62–77 (NYVIENYKLKFITPGV) the chain is Periplasmic. The helical transmembrane segment at 78–98 (IDFICTSLIAVILTIKLFLLI) threads the bilayer. Residues 99–125 (NQFEKQQIKKGRDITSARIMSRIIKIT) lie on the Cytoplasmic side of the membrane. Residues 126–146 (IIVVLVLLYGEHFGMSLSGLL) traverse the membrane as a helical segment. Residue Thr-147 is a topological domain, periplasmic. Residues 148-168 (FGGIGGLAVGMAGKDILSNFF) form a helical membrane-spanning segment. Over 169–343 (SGIMLYFDRP…DNITPPEQGR (175 aa)) the chain is Cytoplasmic.

The protein belongs to the MscS (TC 1.A.23) family. As to quaternary structure, homoheptamer.

It is found in the cell inner membrane. Mechanosensitive channel that protects cells against hypoosmotic stress when highly overexpressed. In Escherichia coli (strain K12), this protein is Low conductance mechanosensitive channel YnaI (ynaI).